The following is a 361-amino-acid chain: Phosphoribosylformylglycinamidine cyclo-ligase (361 aa).

This sequence belongs to the AIR synthase family.

Its subcellular location is the cytoplasm. The enzyme catalyses 2-formamido-N(1)-(5-O-phospho-beta-D-ribosyl)acetamidine + ATP = 5-amino-1-(5-phospho-beta-D-ribosyl)imidazole + ADP + phosphate + H(+). Its pathway is purine metabolism; IMP biosynthesis via de novo pathway; 5-amino-1-(5-phospho-D-ribosyl)imidazole from N(2)-formyl-N(1)-(5-phospho-D-ribosyl)glycinamide: step 2/2. In Bartonella quintana (strain Toulouse) (Rochalimaea quintana), this protein is Phosphoribosylformylglycinamidine cyclo-ligase.